Reading from the N-terminus, the 359-residue chain is Fructose-like permease IIC component 2 (359 aa).

Positions 11–344 constitute a PTS EIIC type-2 domain; the sequence is TRQHLMTGVS…KSLARKNGSS (334 aa). The next 9 membrane-spanning stretches (helical) occupy residues 19-39, 60-80, 99-119, 135-155, 176-196, 216-236, 251-271, 290-310, and 314-334; these read VSHM…SVML, IGVA…GYSI, FGAG…VVHY, IFII…WGLG, SIVM…GGPV, VAIA…ATLI, AALV…AAAD, AALV…LPVV, and LGYI…VNVL.

It localises to the cell inner membrane. In terms of biological role, the phosphoenolpyruvate-dependent sugar phosphotransferase system (PTS), a major carbohydrate active -transport system, catalyzes the phosphorylation of incoming sugar substrates concomitant with their translocation across the cell membrane. The polypeptide is Fructose-like permease IIC component 2 (frwC) (Escherichia coli (strain K12)).